The chain runs to 180 residues: Ribulose bisphosphate carboxylase small subunit, chloroplastic (180 aa).

Residues 1–57 (MASVVASAAVVTPFAASAASTTKSSQIVSVQAGLKAGVFGGKSEWQTKTQTNGSRVS) constitute a chloroplast transit peptide.

It belongs to the RuBisCO small chain family. Heterohexadecamer of 8 large and 8 small subunits.

It localises to the plastid. The protein localises to the chloroplast. Its function is as follows. RuBisCO catalyzes two reactions: the carboxylation of D-ribulose 1,5-bisphosphate, the primary event in carbon dioxide fixation, as well as the oxidative fragmentation of the pentose substrate. Both reactions occur simultaneously and in competition at the same active site. Although the small subunit is not catalytic it is essential for maximal activity. The sequence is that of Ribulose bisphosphate carboxylase small subunit, chloroplastic from Marchantia paleacea (Liverwort).